Reading from the N-terminus, the 80-residue chain is uncharacterized protein (80 aa).

This sequence belongs to the 2-oxoacid dehydrogenase family.

This is an uncharacterized protein from Mycobacterium tuberculosis (strain CDC 1551 / Oshkosh).